A 238-amino-acid chain; its full sequence is tRNA (guanine-N(7)-)-methyltransferase (238 aa).

Positions 68, 93, 120, and 143 each coordinate S-adenosyl-L-methionine. Asp143 is an active-site residue. Substrate contacts are provided by residues Lys147, Asp179, and 216–219 (TKFE).

It belongs to the class I-like SAM-binding methyltransferase superfamily. TrmB family.

It catalyses the reaction guanosine(46) in tRNA + S-adenosyl-L-methionine = N(7)-methylguanosine(46) in tRNA + S-adenosyl-L-homocysteine. It functions in the pathway tRNA modification; N(7)-methylguanine-tRNA biosynthesis. Functionally, catalyzes the formation of N(7)-methylguanine at position 46 (m7G46) in tRNA. The protein is tRNA (guanine-N(7)-)-methyltransferase of Shewanella amazonensis (strain ATCC BAA-1098 / SB2B).